Reading from the N-terminus, the 300-residue chain is L-threonine kinase (300 aa).

92–102 (PVAKGMASSTA) lines the ATP pocket.

The protein belongs to the GHMP kinase family. PduX subfamily.

The protein resides in the cytoplasm. The catalysed reaction is L-threonine + ATP = O-phospho-L-threonine + ADP + H(+). It participates in cofactor biosynthesis; adenosylcobalamin biosynthesis. The protein operates within polyol metabolism; 1,2-propanediol degradation. L-threonine kinase that catalyzes the conversion of L-threonine to L-threonine-O-3-phosphate. Involved in the de novo synthesis of adenosylcobalamin (coenzyme B12) and the assimilation of cobyric acid. Uses ATP; the activity with CTP, GTP or UTP is 6, 11, and 3% of the activity with ATP, respectively. Functionally, the 1,2-propanediol (1,2-PD)-specific bacterial microcompartment (BMC) concentrates low levels of 1,2-PD catabolic enzymes, concentrates volatile reaction intermediates thus enhancing pathway flux and keeps the level of toxic, mutagenic propionaldehyde low. This gene probably benefits from its induction via the Pdu promoter, rather than a physical interaction with the BMC. The polypeptide is L-threonine kinase (Salmonella typhimurium (strain LT2 / SGSC1412 / ATCC 700720)).